The sequence spans 729 residues: Transketolase (729 aa).

Histidine 97 lines the substrate pocket. Thiamine diphosphate is bound by residues histidine 138 and 186-188; that span reads GPL. Position 227 (aspartate 227) interacts with Mg(2+). Residues glycine 228 and asparagine 257 each contribute to the thiamine diphosphate site. Mg(2+)-binding residues include asparagine 257 and isoleucine 259. Positions 332, 423, and 450 each coordinate substrate. Thiamine diphosphate is bound at residue histidine 332. The Proton donor role is filled by glutamate 477. Phenylalanine 503 serves as a coordination point for thiamine diphosphate. 3 residues coordinate substrate: histidine 527, aspartate 535, and arginine 586.

The protein belongs to the transketolase family. As to quaternary structure, homodimer. Requires Mg(2+) as cofactor. It depends on Ca(2+) as a cofactor. Mn(2+) is required as a cofactor. The cofactor is Co(2+). Thiamine diphosphate serves as cofactor.

It catalyses the reaction D-sedoheptulose 7-phosphate + D-glyceraldehyde 3-phosphate = aldehydo-D-ribose 5-phosphate + D-xylulose 5-phosphate. Its function is as follows. Catalyzes the transfer of a two-carbon ketol group from a ketose donor to an aldose acceptor, via a covalent intermediate with the cofactor thiamine pyrophosphate. The protein is Transketolase of Streptococcus pyogenes serotype M6 (strain ATCC BAA-946 / MGAS10394).